A 342-amino-acid polypeptide reads, in one-letter code: Cytosolic Fe-S cluster assembly factor NBP35 (342 aa).

Residues Cys-33, Cys-47, Cys-50, and Cys-56 each coordinate [4Fe-4S] cluster. 86–93 (GKGGVGKS) is a binding site for ATP. 2 residues coordinate [4Fe-4S] cluster: Cys-259 and Cys-262.

The protein belongs to the Mrp/NBP35 ATP-binding proteins family. NUBP1/NBP35 subfamily. Heterotetramer of 2 NBP35 and 2 CFD1 chains. The cofactor is [4Fe-4S] cluster.

The protein localises to the cytoplasm. Its function is as follows. Component of the cytosolic iron-sulfur (Fe/S) protein assembly (CIA) machinery. Required for maturation of extramitochondrial Fe-S proteins. The NBP35-CFD1 heterotetramer forms a Fe-S scaffold complex, mediating the de novo assembly of an Fe-S cluster and its transfer to target apoproteins. The protein is Cytosolic Fe-S cluster assembly factor NBP35 of Gibberella zeae (strain ATCC MYA-4620 / CBS 123657 / FGSC 9075 / NRRL 31084 / PH-1) (Wheat head blight fungus).